We begin with the raw amino-acid sequence, 61 residues long: MVVRLAVRANMPKDSLARDSLPKDSLARDFLSDKTSPTDGTQSSDRYLLKIVTAVDYVHLT.

This is an uncharacterized protein from Frog virus 3 (isolate Goorha) (FV-3).